A 94-amino-acid chain; its full sequence is Co-chaperonin GroES (94 aa).

The protein belongs to the GroES chaperonin family. Heptamer of 7 subunits arranged in a ring. Interacts with the chaperonin GroEL.

The protein localises to the cytoplasm. Together with the chaperonin GroEL, plays an essential role in assisting protein folding. The GroEL-GroES system forms a nano-cage that allows encapsulation of the non-native substrate proteins and provides a physical environment optimized to promote and accelerate protein folding. GroES binds to the apical surface of the GroEL ring, thereby capping the opening of the GroEL channel. This Geobacillus sp. (strain WCH70) protein is Co-chaperonin GroES.